Consider the following 333-residue polypeptide: Lipoyl synthase (333 aa).

[4Fe-4S] cluster-binding residues include cysteine 55, cysteine 60, cysteine 66, cysteine 81, cysteine 85, cysteine 88, and serine 292. Residues 67–281 (WEDREATFLI…SAEAERLGFA (215 aa)) form the Radical SAM core domain.

It belongs to the radical SAM superfamily. Lipoyl synthase family. It depends on [4Fe-4S] cluster as a cofactor.

Its subcellular location is the cytoplasm. The catalysed reaction is [[Fe-S] cluster scaffold protein carrying a second [4Fe-4S](2+) cluster] + N(6)-octanoyl-L-lysyl-[protein] + 2 oxidized [2Fe-2S]-[ferredoxin] + 2 S-adenosyl-L-methionine + 4 H(+) = [[Fe-S] cluster scaffold protein] + N(6)-[(R)-dihydrolipoyl]-L-lysyl-[protein] + 4 Fe(3+) + 2 hydrogen sulfide + 2 5'-deoxyadenosine + 2 L-methionine + 2 reduced [2Fe-2S]-[ferredoxin]. Its pathway is protein modification; protein lipoylation via endogenous pathway; protein N(6)-(lipoyl)lysine from octanoyl-[acyl-carrier-protein]: step 2/2. Functionally, catalyzes the radical-mediated insertion of two sulfur atoms into the C-6 and C-8 positions of the octanoyl moiety bound to the lipoyl domains of lipoate-dependent enzymes, thereby converting the octanoylated domains into lipoylated derivatives. The chain is Lipoyl synthase from Kineococcus radiotolerans (strain ATCC BAA-149 / DSM 14245 / SRS30216).